The chain runs to 254 residues: uncharacterized protein (254 aa).

The NADP(+) site is built by V7 and N85. The active-site Proton donor is S136. 4 residues coordinate NADP(+): Y150, K154, V181, and T183. Y150 acts as the Proton acceptor in catalysis. The Lowers pKa of active site Tyr role is filled by K154.

This sequence belongs to the short-chain dehydrogenases/reductases (SDR) family.

This is an uncharacterized protein from Saccharomyces cerevisiae (strain ATCC 204508 / S288c) (Baker's yeast).